The following is an 801-amino-acid chain: Mitochondrial intermediate peptidase (801 aa).

Residues 1-41 (MKDQLLVPLRRRPWTCQKCLQRLQLPRHQTRRSFETAASPF) constitute a mitochondrion transit peptide. A Zn(2+)-binding site is contributed by His564. Residue Glu565 is part of the active site. Residues His568 and His571 each coordinate Zn(2+).

It belongs to the peptidase M3 family. Zn(2+) is required as a cofactor.

It is found in the mitochondrion matrix. The enzyme catalyses Release of an N-terminal octapeptide as second stage of processing of some proteins imported into the mitochondrion.. Cleaves proteins, imported into the mitochondrion, to their mature size. While most mitochondrial precursor proteins are processed to the mature form in one step by mitochondrial processing peptidase (MPP), the sequential cleavage by MIP of an octapeptide after initial processing by MPP is a required step for a subgroup of nuclear-encoded precursor proteins destined for the matrix or the inner membrane. In Aspergillus fumigatus (strain CBS 144.89 / FGSC A1163 / CEA10) (Neosartorya fumigata), this protein is Mitochondrial intermediate peptidase (oct1).